The chain runs to 304 residues: NuA3 HAT complex component PDP3 (304 aa).

The 62-residue stretch at 7–68 (TGDLVLCKVG…PSRLKELDQD (62 aa)) folds into the PWWP domain. A disordered region spans residues 145-195 (KKNSISIKEDPEDNQKSNEEESKPNIKPSKKKRPTANSGGKSNSGNKKKVK). Basic and acidic residues predominate over residues 151 to 168 (IKEDPEDNQKSNEEESKP).

In terms of assembly, component of the NuA3 histone acetyltransferase (HAT) complex. The NuA3 HAT complex has 2 functionally distinct forms that participate in transcription. The NuA3a HAT complex is composed of at least NTO1, SAS3, TAF14, YNG1 and EAF6. The NuA3b HAT complex contains an additional subunit, PDP3.

The protein localises to the nucleus. It localises to the cytoplasm. Its function is as follows. Histone-binding component of the NuA3b histone acetyltransferase complex. Targets the NuA3b HAT complex via histone H3K36me3 to the coding regions of actively transcribed genes to coordinate transcription elongation. Stimulates elongation by RNA polymerase II in vitro. In Saccharomyces cerevisiae (strain ATCC 204508 / S288c) (Baker's yeast), this protein is NuA3 HAT complex component PDP3.